Here is a 189-residue protein sequence, read N- to C-terminus: Resolvase (189 aa).

In terms of domain architecture, Resolvase/invertase-type recombinase catalytic spans 1-139; sequence MLVGYARVST…EGLRSAKARG (139 aa). Residue serine 9 is the O-(5'-phospho-DNA)-serine intermediate of the active site. The disordered stretch occupies residues 130–151; that stretch reads EGLRSAKARGRNGGRPSKRNDK. A DNA-binding region (H-T-H motif) is located at residues 165 to 184; that stretch reads IVDIVKQTELSRATVYRILK.

The protein belongs to the site-specific recombinase resolvase family.

A likely role for the res protein would be to stabilize pCP13 by reducing the number of plasmid multimers resulting from homologous recombination. The chain is Resolvase (res) from Clostridium perfringens (strain 13 / Type A).